A 294-amino-acid chain; its full sequence is Undecaprenyl-diphosphatase (294 aa).

6 helical membrane-spanning segments follow: residues 39–59 (PGAAFTAIIQIGTELAVILYF), 93–113 (ATLGWNIIVGSIPIVILGFTL), 123–143 (NLWITVTVLLVFGVLLWVVDA), 198–218 (SFLMAIPAVFGSGLLETVKAV), 232–252 (PTLVAMVISFVLGYIVIIGFL), and 268–288 (IGLAVVVALLLIVGVLPAIDP).

The protein belongs to the UppP family.

It localises to the cell membrane. It catalyses the reaction di-trans,octa-cis-undecaprenyl diphosphate + H2O = di-trans,octa-cis-undecaprenyl phosphate + phosphate + H(+). Its function is as follows. Catalyzes the dephosphorylation of undecaprenyl diphosphate (UPP). Confers resistance to bacitracin. The sequence is that of Undecaprenyl-diphosphatase from Bifidobacterium longum subsp. infantis (strain ATCC 15697 / DSM 20088 / JCM 1222 / NCTC 11817 / S12).